Here is a 238-residue protein sequence, read N- to C-terminus: uncharacterized protein (238 aa).

The region spanning 1–64 (MRLDKYLSKS…KPKKNVYLML (64 aa)) is the S4 RNA-binding domain. D103 serves as the catalytic Nucleophile.

The protein belongs to the pseudouridine synthase RsuA family.

The catalysed reaction is a uridine in RNA = a pseudouridine in RNA. This is an uncharacterized protein from Aquifex aeolicus (strain VF5).